A 940-amino-acid polypeptide reads, in one-letter code: Isoleucine--tRNA ligase (940 aa).

A 'HIGH' region motif is present at residues 58 to 68 (PYANGNIHIGH). Glu-563 contributes to the L-isoleucyl-5'-AMP binding site. The 'KMSKS' region signature appears at 604–608 (KMSKS). Lys-607 provides a ligand contact to ATP. 4 residues coordinate Zn(2+): Cys-903, Cys-906, Cys-923, and Cys-926.

This sequence belongs to the class-I aminoacyl-tRNA synthetase family. IleS type 1 subfamily. As to quaternary structure, monomer. The cofactor is Zn(2+).

Its subcellular location is the cytoplasm. It catalyses the reaction tRNA(Ile) + L-isoleucine + ATP = L-isoleucyl-tRNA(Ile) + AMP + diphosphate. Functionally, catalyzes the attachment of isoleucine to tRNA(Ile). As IleRS can inadvertently accommodate and process structurally similar amino acids such as valine, to avoid such errors it has two additional distinct tRNA(Ile)-dependent editing activities. One activity is designated as 'pretransfer' editing and involves the hydrolysis of activated Val-AMP. The other activity is designated 'posttransfer' editing and involves deacylation of mischarged Val-tRNA(Ile). The protein is Isoleucine--tRNA ligase of Buchnera aphidicola subsp. Acyrthosiphon pisum (strain APS) (Acyrthosiphon pisum symbiotic bacterium).